Reading from the N-terminus, the 215-residue chain is Probable transaldolase (215 aa).

The active-site Schiff-base intermediate with substrate is the Lys-83.

It belongs to the transaldolase family. Type 3B subfamily.

The protein resides in the cytoplasm. It catalyses the reaction D-sedoheptulose 7-phosphate + D-glyceraldehyde 3-phosphate = D-erythrose 4-phosphate + beta-D-fructose 6-phosphate. Its pathway is carbohydrate degradation; pentose phosphate pathway; D-glyceraldehyde 3-phosphate and beta-D-fructose 6-phosphate from D-ribose 5-phosphate and D-xylulose 5-phosphate (non-oxidative stage): step 2/3. Its function is as follows. Transaldolase is important for the balance of metabolites in the pentose-phosphate pathway. In Desulforapulum autotrophicum (strain ATCC 43914 / DSM 3382 / VKM B-1955 / HRM2) (Desulfobacterium autotrophicum), this protein is Probable transaldolase.